The sequence spans 120 residues: Large ribosomal subunit protein uL18 (120 aa).

Residues 1–23 (MKLSRKESVRRRHQRVRRKINGT) form a disordered region. A compositionally biased stretch (basic residues) spans 8–20 (SVRRRHQRVRRKI).

Belongs to the universal ribosomal protein uL18 family. Part of the 50S ribosomal subunit; part of the 5S rRNA/L5/L18/L25 subcomplex. Contacts the 5S and 23S rRNAs.

In terms of biological role, this is one of the proteins that bind and probably mediate the attachment of the 5S RNA into the large ribosomal subunit, where it forms part of the central protuberance. This chain is Large ribosomal subunit protein uL18, found in Microcystis aeruginosa (strain NIES-843 / IAM M-2473).